The following is a 245-amino-acid chain: Lytic switch protein BZLF1 (245 aa).

Residues 1-167 (MMDPNSTSED…RTRKPLQPES (167 aa)) are transactivation. Threonine 14 and threonine 159 each carry phosphothreonine. The tract at residues 140-167 (QLADIGAPQPAPAAAPARRTRKPLQPES) is disordered. A Bipartite nuclear localization signal motif is present at residues 157–194 (RRTRKPLQPESLEECDSELDIKRYKNRVASRKCRAKFK). Phosphoserine occurs at positions 167, 173, and 186. Residues 178–195 (KRYKNRVASRKCRAKFKH) form a basic motif region. The 51-residue stretch at 178-228 (KRYKNRVASRKCRAKFKHLLQHYREVASAKSSENDRLRLLLKQMCPSLDVD) folds into the bZIP domain. The segment at 196–228 (LLQHYREVASAKSSENDRLRLLLKQMCPSLDVD) is leucine-zipper. The segment at 229–245 (SIIPRTPDVLHEDLLNF) is accessory activation domain.

This sequence belongs to the bZIP family. As to quaternary structure, homodimer. Interacts (via b-ZIP domain) with the DNA polymerase processivity factor BMRF1 (via N-terminus); this interaction may inhibit BZLF1-induced transcription of the BMRF1 promoter. Interacts with human UBN1, CRTC2 and RACK1. Interacts (via N-terminus) with human PAX5 (via N-terminus); this interaction inhibits BZLF1-mediated lytic viral reactivation. Interacts (via leucine-zipper domain) with host CEBPA; this interaction induces G1 host cell cycle arrest. Interacts (via C-terminus) with host TP53BP1 (via C-terminus); this interaction is involved in the activation of the viral lytic cycle. Interacts with host chromatin-remodeling ATPase INO80; this interaction participates to the activation of early lytic viral genes by BZLF1. Interacts with host regulator of chromatin SMARCA5/hSNF2H; this interaction participates to the activation of early lytic viral genes by BZLF1. Interacts with host PLSCR1/Phospholipid scramblase 1; this interaction negatively regulates the transcriptional regulatory activity of BZLF1 by preventing the formation of the BZLF1-CBP complex.

The protein resides in the host nucleus. Transcription factor that acts as a molecular switch to induce the transition from the latent to the lytic or productive phase of the virus cycle. Mediates the switch from the latent to the lytic cycle of infection in cells containing a highly methylated viral genome. Probably binds to silenced chromatin and recruits host chromatin-remodeling enzymes. Regulates this switch by binding to 2 types of ZEBRA response elements (ZREs): the CpG-free AP-1 like elements (latency) and the methylated CpG-containing elements (lytic replication). Activates preferentially the methylated forms of the viral lytic R (BRLF1) and Na (BRRF1) gene promoters, the latters being the first genes activated during Z-mediated reactivation in latently infected cells. BZLF1 and BRLF1 act together to trigger lytic replication. Also binds the lytic origin of replication, oriLyt. Induces G1 cell cycle arrest by stabilizing the host CCAAT/enhancer binding protein CEBPA. This function is important because the lytic cycle preferentially takes place in host cells arrested in G1. The chain is Lytic switch protein BZLF1 from Epstein-Barr virus (strain AG876) (HHV-4).